The chain runs to 375 residues: Growth/differentiation factor 8 (375 aa).

The signal sequence occupies residues 1 to 18 (MQRLQICVYIYLFVLIVA). A propeptide spanning residues 19–266 (GPVDLSENSE…VTDTPKRSRR (248 aa)) is cleaved from the precursor. An N-linked (GlcNAc...) asparagine glycan is attached at asparagine 71. 4 cysteine pairs are disulfide-bonded: cysteine 272–cysteine 282, cysteine 281–cysteine 340, cysteine 309–cysteine 372, and cysteine 313–cysteine 374.

The protein belongs to the TGF-beta family. In terms of assembly, homodimer; disulfide-linked. Interacts with WFIKKN2, leading to inhibit its activity. Interacts with FSTL3. Post-translationally, synthesized as large precursor molecule that undergoes proteolytic cleavage to generate an N-terminal propeptide and a disulfide linked C-terminal dimer, which is the biologically active molecule. The circulating form consists of a latent complex of the C-terminal dimer and other proteins, including its propeptide, which maintain the C-terminal dimer in a latent, inactive state. Ligand activation requires additional cleavage of the prodomain by a tolloid-like metalloproteinase.

It localises to the secreted. Functionally, acts specifically as a negative regulator of skeletal muscle growth. In Canis lupus familiaris (Dog), this protein is Growth/differentiation factor 8 (MSTN).